A 614-amino-acid polypeptide reads, in one-letter code: Type VII secretion system protein EssD (614 aa).

The disordered stretch occupies residues 417 to 445; it reads QNHVTHGPKDSMVRSEGKHSISSHEMNSS. Over residues 423–435 the composition is skewed to basic and acidic residues; sequence GPKDSMVRSEGKH.

The protein belongs to the EssD family. As to quaternary structure, interacts (via C-terminal) with EssG; this interaction blocks EssD activity. Interacts with EssE.

The protein localises to the secreted. Its subcellular location is the cell membrane. Functionally, component of the type VII secretion system (Ess). Plays a role in Ess secretion during infection. Required for the efficient secretion of EsxA. Required for abscess formation and staphylococcal persistence in host tissues. Possesses a toxic DNase activity that is modulated by EsaG by forming a nuclease toxin-antitoxin pair. This nuclease toxin targets competitor bacteria. The sequence is that of Type VII secretion system protein EssD from Staphylococcus aureus (strain USA300).